The chain runs to 195 residues: L-rhamnose-binding lectin CSL2 (195 aa).

SUEL-type lectin domains follow at residues 1 to 97 (TRVV…YTCL) and 104 to 195 (TCEG…YTCG).

L-rhamnose binding lectin. Has hemagglutinating activity towards rabbit erythrocytes and human type B erythrocytes. Hemagglutinating activity is inhibited by smooth-type lipopolysaccharide (LPS) from S.flexneri 1A and E.coli K12, but not by rough-type LPS from S.flexneri, E.coli K12 and E.coli EH100. Agglutinates E.coli K12 and B.subtilis. The protein is L-rhamnose-binding lectin CSL2 of Oncorhynchus keta (Chum salmon).